We begin with the raw amino-acid sequence, 242 residues long: Protein MHF1 homolog (242 aa).

Residues 208–242 (LKAKEPQSERKRKKGSAKKEDKASSSNAVRITTDL) form a disordered region. Positions 231 to 242 (SSSNAVRITTDL) are enriched in polar residues.

It belongs to the TAF9 family. CENP-S/MHF1 subfamily.

The protein localises to the nucleus. Functionally, involved in the promotion of spontaneous somatic homologous recombination (HR) events, which is opposite to the function of FANCM in ordered HR. Only FANCM is essential for replicative repair in the absence of the endonuclease MUS81. Acts in the same pathway as FANCM to restrain class II meiotic crossing over (CO), and acts with FANCM during meiosis to repair interstrand cross-links (ICLs). This common pathway between MHF1 and FANCM is in parallel to the pathway that involves the RECQ4A helicase. This Arabidopsis thaliana (Mouse-ear cress) protein is Protein MHF1 homolog.